We begin with the raw amino-acid sequence, 294 residues long: Acetylglutamate kinase (294 aa).

Residues 63-64 (GG), R85, and N188 contribute to the substrate site.

This sequence belongs to the acetylglutamate kinase family. ArgB subfamily.

It is found in the cytoplasm. The enzyme catalyses N-acetyl-L-glutamate + ATP = N-acetyl-L-glutamyl 5-phosphate + ADP. It participates in amino-acid biosynthesis; L-arginine biosynthesis; N(2)-acetyl-L-ornithine from L-glutamate: step 2/4. Functionally, catalyzes the ATP-dependent phosphorylation of N-acetyl-L-glutamate. The sequence is that of Acetylglutamate kinase from Methanococcus aeolicus (strain ATCC BAA-1280 / DSM 17508 / OCM 812 / Nankai-3).